The following is a 412-amino-acid chain: Odorant receptor 47b (412 aa).

At 1–74 (MNDSGYQSNL…NLFIMCNVMT (74 aa)) the chain is on the cytoplasmic side. The chain crosses the membrane as a helical span at residues 75–95 (IFWTMFVALPESKNVIEMGDD). At 96-103 (LVWISGMA) the chain is on the extracellular side. Residues 104 to 124 (LVFTKIFYMHLRCDEIDELIS) form a helical membrane-spanning segment. Topologically, residues 125-169 (DFEYYNRELRPHNIDEEVLGWQRLCYVIESGLYINCFCLVNFFSA) are cytoplasmic. Residues 170–190 (AIFLQPLLGEGKLPFHSVYPF) form a helical membrane-spanning segment. The Extracellular portion of the chain corresponds to 191–229 (QWHRLDLHPYTFWFLYIWQSLTSQHNLMSILMVDMVGIS). The chain crosses the membrane as a helical span at residues 230 to 250 (TFLQTALNLKLLCIEIRKLGD). Over 251–302 (MEVSDKRFHEEFCRVVRFHQHIIKLVGKANRAFNGAFNAQLMASFSLISIST) the chain is Cytoplasmic. Residues 303–323 (FETMAAAAVDPKMAAKFVLLM) traverse the membrane as a helical segment. The Extracellular portion of the chain corresponds to 324–330 (LVAFIQL). A helical transmembrane segment spans residues 331–351 (SLWCVSGTLVYTQSVEVAQAA). Residues 352–389 (FDINDWHTKSPGIQRDISFVILRAQKPLMYVAEPFLPF) lie on the Cytoplasmic side of the membrane. A helical membrane pass occupies residues 390–410 (TLGTYMLVLKNCYRLLALMQE). Residues 411–412 (SM) are Extracellular-facing.

This sequence belongs to the insect chemoreceptor superfamily. Heteromeric odorant receptor channel (TC 1.A.69) family. Or49a subfamily. As to quaternary structure, interacts with Orco. Complexes exist early in the endomembrane system in olfactory sensory neurons (OSNs), coupling these complexes to the conserved ciliary trafficking pathway. As to expression, expressed in olfactory sensory neurons in the antenna.

The protein localises to the cell membrane. Functionally, odorant receptor which mediates acceptance or avoidance behavior, depending on its substrates. The odorant receptor repertoire encodes a large collection of odor stimuli that vary widely in identity, intensity, and duration. May form a complex with Orco to form odorant-sensing units, providing sensitive and prolonged odorant signaling and calcium permeability. Plays an important role in sociosexual interactions since its enhances courtship in a pheromone-dependent manner. In Drosophila melanogaster (Fruit fly), this protein is Odorant receptor 47b (Or47b).